Here is a 264-residue protein sequence, read N- to C-terminus: NADH-quinone oxidoreductase subunit I 2 (264 aa).

2 consecutive 4Fe-4S ferredoxin-type domains span residues 57–86 (GFLEVDSGICTGCQACERACPIGCIQISLE) and 98–127 (TQFDIDEAKCMFCGLCVEPCPTGSIQHTRE). 8 residues coordinate [4Fe-4S] cluster: Cys-66, Cys-69, Cys-72, Cys-76, Cys-107, Cys-110, Cys-113, and Cys-117. Positions 183-264 (APQFLPPEPP…AAPAANPESK (82 aa)) are disordered. A compositionally biased stretch (low complexity) spans 197–264 (AKPAAKAAPA…AAPAANPESK (68 aa)).

The protein belongs to the complex I 23 kDa subunit family. NDH-1 is composed of 14 different subunits. Subunits NuoA, H, J, K, L, M, N constitute the membrane sector of the complex. The cofactor is [4Fe-4S] cluster.

It is found in the cell inner membrane. It catalyses the reaction a quinone + NADH + 5 H(+)(in) = a quinol + NAD(+) + 4 H(+)(out). In terms of biological role, NDH-1 shuttles electrons from NADH, via FMN and iron-sulfur (Fe-S) centers, to quinones in the respiratory chain. The immediate electron acceptor for the enzyme in this species is believed to be ubiquinone. Couples the redox reaction to proton translocation (for every two electrons transferred, four hydrogen ions are translocated across the cytoplasmic membrane), and thus conserves the redox energy in a proton gradient. This Anaeromyxobacter dehalogenans (strain 2CP-C) protein is NADH-quinone oxidoreductase subunit I 2.